A 543-amino-acid polypeptide reads, in one-letter code: Gap junction alpha-10 protein (543 aa).

The Cytoplasmic portion of the chain corresponds to 1-16; sequence MGDWNLLGGILEEVHS. Residues 17–37 form a helical membrane-spanning segment; sequence HSTIVGKIWLTILFIFRMLVL. At 38 to 76 the chain is on the extracellular side; the sequence is RVAAEDVWDDEQSAFACNTRQPGCNNICYDDAFPISLIR. The chain crosses the membrane as a helical span at residues 77–97; the sequence is FWVLQIIFVSSPSLVYMGHAL. The Cytoplasmic segment spans residues 98–165; the sequence is YRLRAFEKDR…TYVLHILTRS (68 aa). The helical transmembrane segment at 166-186 threads the bilayer; sequence VLEVGFMIGQYILYGFQMHPL. At 187 to 209 the chain is on the extracellular side; sequence YKCTQPPCPNAVDCFVSRPTEKT. Residues 210-230 form a helical membrane-spanning segment; that stretch reads IFMLFMHSIAAISLLLNILEI. The Cytoplasmic portion of the chain corresponds to 231–543; sequence FHLGIRKIMR…HSIHSVKFNS (313 aa). Disordered regions lie at residues 306–359 and 379–424; these read PQPR…SSFG and PSFA…DRSR. The segment covering 317–328 has biased composition (basic and acidic residues); that stretch reads NGKKDWSEKDQH. The span at 344–359 shows a compositional bias: polar residues; sequence AGNQHLGQQSDHSSFG. A compositionally biased stretch (basic and acidic residues) spans 400-413; the sequence is TDLHSHCRDSEGSM.

This sequence belongs to the connexin family. Alpha-type (group II) subfamily. A connexon is composed of a hexamer of connexins. As to expression, expressed in skeletal muscle and heart.

The protein localises to the cell membrane. Its subcellular location is the cell junction. The protein resides in the gap junction. Its function is as follows. One gap junction consists of a cluster of closely packed pairs of transmembrane channels, the connexons, through which materials of low MW diffuse from one cell to a neighboring cell. Involved in tracer coupling between horizontal cells of the retina. May play a role in the regulation of horizontal cell patterning. This is Gap junction alpha-10 protein (GJA10) from Homo sapiens (Human).